The chain runs to 548 residues: Non-structural protein NS1 (548 aa).

The protein belongs to the orbivirus non-structural protein NS1 family.

The protein is Non-structural protein NS1 (Segment-5) of African horse sickness virus (AHSV).